Reading from the N-terminus, the 474-residue chain is tRNA-2-methylthio-N(6)-dimethylallyladenosine synthase (474 aa).

The MTTase N-terminal domain occupies 3-120 (QKLHIKTWGC…LPEMINQIRG (118 aa)). Positions 12, 49, 83, 157, 161, and 164 each coordinate [4Fe-4S] cluster. Positions 143 to 375 (KAEGPTAFVS…QQRINNQAAK (233 aa)) constitute a Radical SAM core domain. Residues 378 to 441 (RAMLGTEQRV…TNSLRGDVIR (64 aa)) form the TRAM domain.

The protein belongs to the methylthiotransferase family. MiaB subfamily. In terms of assembly, monomer. The cofactor is [4Fe-4S] cluster.

Its subcellular location is the cytoplasm. It carries out the reaction N(6)-dimethylallyladenosine(37) in tRNA + (sulfur carrier)-SH + AH2 + 2 S-adenosyl-L-methionine = 2-methylsulfanyl-N(6)-dimethylallyladenosine(37) in tRNA + (sulfur carrier)-H + 5'-deoxyadenosine + L-methionine + A + S-adenosyl-L-homocysteine + 2 H(+). In terms of biological role, catalyzes the methylthiolation of N6-(dimethylallyl)adenosine (i(6)A), leading to the formation of 2-methylthio-N6-(dimethylallyl)adenosine (ms(2)i(6)A) at position 37 in tRNAs that read codons beginning with uridine. This chain is tRNA-2-methylthio-N(6)-dimethylallyladenosine synthase, found in Actinobacillus succinogenes (strain ATCC 55618 / DSM 22257 / CCUG 43843 / 130Z).